We begin with the raw amino-acid sequence, 475 residues long: Luvungin A synthase CYP716AC1 (475 aa).

Residues 3 to 23 (FIILSLLLLSLALYSLYYVII) traverse the membrane as a helical segment. A heme-binding site is contributed by Cys423.

This sequence belongs to the cytochrome P450 family. The cofactor is heme. Expressed in flowers, maturing fruits and in juice vesicles.

The protein resides in the membrane. It carries out the reaction (21S)-21-acetoxyl-apo-melianone + reduced [NADPH--hemoprotein reductase] + O2 = luvungin A + oxidized [NADPH--hemoprotein reductase] + H2O + H(+). It participates in secondary metabolite biosynthesis; terpenoid biosynthesis. Monooxygenase involved in the biosynthesis of limonoids triterpene natural products such as limonin, a compound with insecticidal activity responsible for the bitter taste in citrus. Catalyzes the conversion of (21S)-21-acetoxyl-apo-melianone to luvungin A. The protein is Luvungin A synthase CYP716AC1 of Citrus sinensis (Sweet orange).